A 328-amino-acid polypeptide reads, in one-letter code: Tetraacyldisaccharide 4'-kinase (328 aa).

An ATP-binding site is contributed by 55 to 62; sequence TAGGNGKT.

Belongs to the LpxK family.

It catalyses the reaction a lipid A disaccharide + ATP = a lipid IVA + ADP + H(+). Its pathway is glycolipid biosynthesis; lipid IV(A) biosynthesis; lipid IV(A) from (3R)-3-hydroxytetradecanoyl-[acyl-carrier-protein] and UDP-N-acetyl-alpha-D-glucosamine: step 6/6. Transfers the gamma-phosphate of ATP to the 4'-position of a tetraacyldisaccharide 1-phosphate intermediate (termed DS-1-P) to form tetraacyldisaccharide 1,4'-bis-phosphate (lipid IVA). The chain is Tetraacyldisaccharide 4'-kinase from Escherichia coli O81 (strain ED1a).